A 332-amino-acid chain; its full sequence is 2,3-diketo-L-gulonate reductase (332 aa).

Residue histidine 44 is the Proton donor of the active site. NAD(+)-binding positions include isoleucine 168 to serine 174, tryptophan 224 to lysine 225, and glycine 304 to glutamate 306.

It belongs to the LDH2/MDH2 oxidoreductase family. DlgD subfamily. As to quaternary structure, homodimer.

Its subcellular location is the cytoplasm. The enzyme catalyses 3-dehydro-L-gulonate + NAD(+) = 2,3-dioxo-L-gulonate + NADH + H(+). It carries out the reaction 3-dehydro-L-gulonate + NADP(+) = 2,3-dioxo-L-gulonate + NADPH + H(+). In terms of biological role, catalyzes the reduction of 2,3-diketo-L-gulonate in the presence of NADH, to form 3-keto-L-gulonate. The sequence is that of 2,3-diketo-L-gulonate reductase from Mannheimia succiniciproducens (strain KCTC 0769BP / MBEL55E).